The primary structure comprises 722 residues: Mesentericin-Y105 transport/processing ATP-binding protein MesD (722 aa).

The Peptidase C39 domain maps to 16-143 (QVDERDCGVA…EEWTGVSIFI (128 aa)). Cysteine 22 is a catalytic residue. Transmembrane regions (helical) follow at residues 171–191 (LLVINIVIAALLVTLVSILGS), 210–230 (LGIVSLGLIFAYVIQQLLSYA), 242–262 (LSIDIILSYIKHIFELPMSFF), 287–307 (TMLSVFLDLGILVIVGTVLVV), 311–331 (TLFLISLIAIPAYALVVWLFM), 401–421 (SLLQLSLNVVILWVGAQLVMT), 429–449 (LITYNALLGFFTDPLQNIINL), and 518–538 (IALVGISGSGKSTLVKLLVNF). One can recognise an ABC transmembrane type-1 domain in the interval 173 to 455 (VINIVIAALL…IINLQTKLQQ (283 aa)). Residues 489–722 (LVADHITYKY…GGFYASLFNH (234 aa)) form the ABC transporter domain. 522–529 (GISGSGKS) provides a ligand contact to ATP.

The protein belongs to the ABC transporter superfamily.

The protein resides in the cell membrane. Its function is as follows. Involved in the export process of the bacteriocin mesentericin-Y105. The polypeptide is Mesentericin-Y105 transport/processing ATP-binding protein MesD (mesD) (Leuconostoc mesenteroides).